The following is a 112-amino-acid chain: Nitrogen regulatory protein P-II (112 aa).

At Y51 the chain carries O-UMP-tyrosine.

Belongs to the P(II) protein family. Homotrimer.

It is found in the plastid. The protein resides in the chloroplast. In terms of biological role, P-II indirectly controls the transcription of the glutamine synthetase gene (glnA). P-II prevents NR-II-catalyzed conversion of NR-I to NR-I-phosphate, the transcriptional activator of glnA. When P-II is uridylylated to P-II-UMP, these events are reversed. When the ratio of Gln to 2-ketoglutarate decreases, P-II is uridylylated to P-II-UMP, which causes the deadenylation of glutamine synthetase, so activating the enzyme. The chain is Nitrogen regulatory protein P-II (glnB) from Porphyra purpurea (Red seaweed).